We begin with the raw amino-acid sequence, 1363 residues long: Spike glycoprotein (1363 aa).

The N-terminal stretch at 1–13 is a signal peptide; the sequence is MFLILLISLPMAF. Topologically, residues 14-1307 are extracellular; sequence AVIGDLKCTT…GTYEYYVKWP (1294 aa). A BetaCoV S1-NTD domain is found at 15–298; it reads VIGDLKCTTV…DFMSEIKCKT (284 aa). Disulfide bonds link Cys21–Cys165, Cys160–Cys193, Cys172–Cys252, Cys286–Cys296, and Cys331–Cys356. N-linked (GlcNAc...) asparagine; by host glycans are attached at residues Asn59 and Asn133. A glycan (N-linked (GlcNAc...) asparagine; by host) is linked at Asn198. Positions 329–617 constitute a BetaCoV S1-CTD domain; that stretch reads PDCNIEAWLN…DVNSGTTCST (289 aa). Asn359 carries N-linked (GlcNAc...) asparagine; by host glycosylation. 2 disulfides stabilise this stretch: Cys374-Cys427 and Cys386-Cys615. Residues Asn437, Asn649, Asn676, Asn696, Asn714, Asn739, and Asn788 are each glycosylated (N-linked (GlcNAc...) asparagine; by host). 2 fusion peptide regions span residues 914–935 and 933–953; these read SAIE…VEAY and EAYN…VQSY. N-linked (GlcNAc...) asparagine; by host glycosylation occurs at Asn937. A disulfide bond links Cys938 and Cys949. A heptad repeat 1 region spans residues 1014 to 1064; the sequence is QKLIANAFNNALDAIQEGFDATNSALVKIQAVVNANAEALNNLLQQLSNRF. Positions 1043 to 1087 form a coiled coil; it reads QAVVNANAEALNNLLQQLSNRFGAISSSLQEILSRLDALEAQAQI. N-linked (GlcNAc...) asparagine; by host glycosylation is found at Asn1194, Asn1224, Asn1234, Asn1253, Asn1267, and Asn1288. Positions 1258-1296 are heptad repeat 2; it reads APDLSLDYINVTFLDLQDEMNRLQEAIKVLNQSYINLKD. Positions 1269–1297 form a coiled coil; that stretch reads TFLDLQDEMNRLQEAIKVLNQSYINLKDI. A helical membrane pass occupies residues 1308 to 1328; sequence WYVWLLIGFAGVAMLVLLFFI. The Cytoplasmic portion of the chain corresponds to 1329–1363; it reads CCCTGCGTSCFKICGGCCDDYTGHQELVIKTSHDD. The short motif at 1359–1363 is the KxHxx element; the sequence is TSHDD.

Belongs to the betacoronaviruses spike protein family. As to quaternary structure, homotrimer; each monomer consists of a S1 and a S2 subunit. The resulting peplomers protrude from the virus surface as spikes. In terms of processing, specific enzymatic cleavages in vivo yield mature proteins. The precursor is processed into S1 and S2 by host cell furin or another cellular protease to yield the mature S1 and S2 proteins. Additionally, a second cleavage leads to the release of a fusion peptide after viral attachment to host cell receptor. The cytoplasmic Cys-rich domain is palmitoylated. Spike glycoprotein is digested within host endosomes.

The protein resides in the virion membrane. It localises to the host endoplasmic reticulum-Golgi intermediate compartment membrane. Its subcellular location is the host cell membrane. In terms of biological role, attaches the virion to the cell membrane by interacting with host receptor, initiating the infection. Mediates fusion of the virion and cellular membranes by acting as a class I viral fusion protein. Under the current model, the protein has at least three conformational states: pre-fusion native state, pre-hairpin intermediate state, and post-fusion hairpin state. During viral and target cell membrane fusion, the coiled coil regions (heptad repeats) assume a trimer-of-hairpins structure, positioning the fusion peptide in close proximity to the C-terminal region of the ectodomain. The formation of this structure appears to drive apposition and subsequent fusion of viral and target cell membranes. Its function is as follows. Acts as a viral fusion peptide which is unmasked following S2 cleavage occurring upon virus endocytosis. The polypeptide is Spike glycoprotein (Bovine coronavirus (strain vaccine) (BCoV)).